The primary structure comprises 164 residues: uncharacterized protein (164 aa).

This is an uncharacterized protein from Arabidopsis thaliana (Mouse-ear cress).